A 243-amino-acid chain; its full sequence is uncharacterized protein (243 aa).

Basic and acidic residues-rich tracts occupy residues 1 to 11 and 167 to 178; these read MSDEGYRELVE and RNRDPPRPSYLR. 2 disordered regions span residues 1 to 26 and 146 to 243; these read MSDE…SPDR and ELYQ…CWPF. Residues 185–200 show a composition bias toward low complexity; sequence STTTARRPRAMTSTPE.

This is an uncharacterized protein from Canis lupus familiaris (Dog).